Consider the following 522-residue polypeptide: Chromosomal replication initiator protein DnaA (522 aa).

Residues 1 to 71 (MQDFWHAASA…QSLACDYWEM (71 aa)) are domain I, interacts with DnaA modulators. Residues 71 to 185 (MQVDVQFVLD…PVDDTVHERS (115 aa)) form a domain II region. The segment at 186–402 (RLNPILTFDN…GALRKILAYS (217 aa)) is domain III, AAA+ region. 4 residues coordinate ATP: G230, G232, K233, and T234. The domain IV, binds dsDNA stretch occupies residues 403–522 (NFHGKEITIE…LHVLEQTLKG (120 aa)).

It belongs to the DnaA family. As to quaternary structure, oligomerizes as a right-handed, spiral filament on DNA at oriC.

It is found in the cytoplasm. Functionally, plays an essential role in the initiation and regulation of chromosomal replication. ATP-DnaA binds to the origin of replication (oriC) to initiate formation of the DNA replication initiation complex once per cell cycle. Binds the DnaA box (a 9 base pair repeat at the origin) and separates the double-stranded (ds)DNA. Forms a right-handed helical filament on oriC DNA; dsDNA binds to the exterior of the filament while single-stranded (ss)DNA is stabiized in the filament's interior. The ATP-DnaA-oriC complex binds and stabilizes one strand of the AT-rich DNA unwinding element (DUE), permitting loading of DNA polymerase. After initiation quickly degrades to an ADP-DnaA complex that is not apt for DNA replication. Binds acidic phospholipids. The protein is Chromosomal replication initiator protein DnaA of Ralstonia nicotianae (strain ATCC BAA-1114 / GMI1000) (Ralstonia solanacearum).